The chain runs to 82 residues: MAERSQNLQDLFLNTVRKSKNPLTIFLINGVKLTGVVTSFDNFCVLLRRDGHSQLVYKHAISTIMPSQPVQLFEAEEGSREG.

Residues 10–70 (DLFLNTVRKS…ISTIMPSQPV (61 aa)) form the Sm domain.

The protein belongs to the Hfq family. As to quaternary structure, homohexamer.

In terms of biological role, RNA chaperone that binds small regulatory RNA (sRNAs) and mRNAs to facilitate mRNA translational regulation in response to envelope stress, environmental stress and changes in metabolite concentrations. Also binds with high specificity to tRNAs. The polypeptide is RNA-binding protein Hfq (Chelativorans sp. (strain BNC1)).